Consider the following 707-residue polypeptide: Trans-feruloyl-CoA synthase FCS1 (707 aa).

ATP contacts are provided by residues H267 and 524-535; that span reads ARAIGYPVVMKA. Positions 498–549 constitute an ATP-grasp domain; it reads KELLRPLGIAFPPSQFAANAEAAAAAARAIGYPVVMKAQAAALGHKSDAGGV.

In the N-terminal section; belongs to the acetate CoA ligase alpha subunit family. It in the C-terminal section; belongs to the acetate CoA ligase beta subunit family. Homodimer.

The enzyme catalyses (E)-ferulate + ATP + CoA = (E)-feruloyl-CoA + ADP + phosphate. In terms of biological role, catalyzes the formation of feruloyl-CoA, ADP and phosphate from ferulate, CoA and ATP. The chain is Trans-feruloyl-CoA synthase FCS1 from Unknown prokaryotic organism.